The chain runs to 407 residues: Aminomethyltransferase, mitochondrial (407 aa).

The transit peptide at 1 to 29 directs the protein to the mitochondrion; that stretch reads MRGGLWQVGQSITRRLGQSDKKTIVRRWY. Residues glutamate 234, arginine 265, and tyrosine 403 each coordinate substrate.

It belongs to the GcvT family. The glycine cleavage system is composed of four proteins: P, T, L and H.

The protein resides in the mitochondrion. The enzyme catalyses N(6)-[(R)-S(8)-aminomethyldihydrolipoyl]-L-lysyl-[protein] + (6S)-5,6,7,8-tetrahydrofolate = N(6)-[(R)-dihydrolipoyl]-L-lysyl-[protein] + (6R)-5,10-methylene-5,6,7,8-tetrahydrofolate + NH4(+). The glycine cleavage system catalyzes the degradation of glycine. The chain is Aminomethyltransferase, mitochondrial (GDCST) from Flaveria trinervia (Clustered yellowtops).